Here is a 118-residue protein sequence, read N- to C-terminus: Small ribosomal subunit protein uS13 (118 aa).

Residues 94 to 118 (GLPVRGQRTKTNARTRKGPRKPIKK) are disordered.

The protein belongs to the universal ribosomal protein uS13 family. In terms of assembly, part of the 30S ribosomal subunit. Forms a loose heterodimer with protein S19. Forms two bridges to the 50S subunit in the 70S ribosome.

Functionally, located at the top of the head of the 30S subunit, it contacts several helices of the 16S rRNA. In the 70S ribosome it contacts the 23S rRNA (bridge B1a) and protein L5 of the 50S subunit (bridge B1b), connecting the 2 subunits; these bridges are implicated in subunit movement. Contacts the tRNAs in the A and P-sites. This is Small ribosomal subunit protein uS13 from Klebsiella pneumoniae (strain 342).